The chain runs to 590 residues: Probable serine/threonine-protein phosphatase PP2A regulatory subunit (590 aa).

HEAT repeat units lie at residues 37–73, 74–111, 113–150, 151–188, 189–227, 228–266, 267–305, 306–344, 349–387, 388–426, 427–465, 466–504, 505–543, and 544–582; these read LSTI…VLAE, QLGN…DKAV, SLRK…TSAC, GLFS…RAAA, AKLG…LLTV, ESAI…YMVA, EKLI…CAAT, QRLQ…QLVK, GVIM…LNII, SSLD…LAIV, QFMP…EAST, LIMK…MTCL, FCLN…FNAA, and KSLK…YFSE.

It belongs to the phosphatase 2A regulatory subunit A family. As to quaternary structure, part of a complex consisting of a common heterodimeric core enzyme, composed of catalytic subunit let-92 and constant regulatory subunit paa-1, that associates with a variety of regulatory subunits which confer distinct properties to the holoenzyme. Interacts with rsa-1.

Its subcellular location is the cytoplasm. It is found in the cytoskeleton. The protein resides in the microtubule organizing center. The protein localises to the centrosome. It localises to the spindle. Functionally, acts as a scaffolding protein for phosphatase let-92 and its regulatory subunits. Probably together with let-92 and regulatory subunit sur-6, regulates centriole duplication, microtubule outgrowth and mitotic spindle stability during early embryonic cell division by preventing the degradation of sas-5 and kinase zyg-1. During vulva development, may play a role with phosphatase let-92 and regulatory subunit sur-6 in the induction of vulva cell precursors by positively regulating let-60/Ras-MAP kinase signaling, probably by promoting lin-45 activation. Plays a positive role in axon guidance probably by inhibiting phosphatase let-92. This Caenorhabditis elegans protein is Probable serine/threonine-protein phosphatase PP2A regulatory subunit (paa-1).